The following is a 64-amino-acid chain: Large ribosomal subunit protein bL35 (64 aa).

This sequence belongs to the bacterial ribosomal protein bL35 family.

This chain is Large ribosomal subunit protein bL35, found in Shewanella loihica (strain ATCC BAA-1088 / PV-4).